The chain runs to 254 residues: Small ribosomal subunit protein mS40 (254 aa).

The N-terminal 33 residues, 1–33, are a transit peptide targeting the mitochondrion; that stretch reads MAAPLRHTLLKLVPTLLRSSYVAQVPLQTLCTR. The residue at position 47 (serine 47) is a Phosphoserine. The interval 218–254 is disordered; sequence YQGNLLEESGPPPESMPEMPTTPPAESSIEQPGSQSA. Residues 227-240 show a composition bias toward pro residues; it reads GPPPESMPEMPTTP.

The protein belongs to the bacterial ribosomal protein bS18 family. Mitochondrion-specific ribosomal protein mS40 subfamily. In terms of assembly, component of the mitochondrial ribosome small subunit (28S) which comprises a 12S rRNA and about 30 distinct proteins.

The protein localises to the mitochondrion. The sequence is that of Small ribosomal subunit protein mS40 (Mrps18b) from Mus musculus (Mouse).